The sequence spans 160 residues: SsrA-binding protein (160 aa).

The protein belongs to the SmpB family.

The protein resides in the cytoplasm. Its function is as follows. Required for rescue of stalled ribosomes mediated by trans-translation. Binds to transfer-messenger RNA (tmRNA), required for stable association of tmRNA with ribosomes. tmRNA and SmpB together mimic tRNA shape, replacing the anticodon stem-loop with SmpB. tmRNA is encoded by the ssrA gene; the 2 termini fold to resemble tRNA(Ala) and it encodes a 'tag peptide', a short internal open reading frame. During trans-translation Ala-aminoacylated tmRNA acts like a tRNA, entering the A-site of stalled ribosomes, displacing the stalled mRNA. The ribosome then switches to translate the ORF on the tmRNA; the nascent peptide is terminated with the 'tag peptide' encoded by the tmRNA and targeted for degradation. The ribosome is freed to recommence translation, which seems to be the essential function of trans-translation. This is SsrA-binding protein from Salmonella arizonae (strain ATCC BAA-731 / CDC346-86 / RSK2980).